The following is a 910-amino-acid chain: Staphylococcal nuclease domain-containing protein 1 (910 aa).

At A2 the chain carries N-acetylalanine. 3 TNase-like domains span residues 18-166 (TVQR…MWSE), 193-328 (KPVN…IWRD), and 341-496 (KQFV…LHSK). The residue at position 103 (T103) is a Phosphothreonine. Residue K193 is modified to N6-acetyllysine. T240 carries the post-translational modification Phosphothreonine. 2 short sequence motifs (nuclear localization signal) span residues 321–325 (RRLRI) and 388–392 (KKLRP). S426 is subject to Phosphoserine. K513 is covalently cross-linked (Glycyl lysine isopeptide (Lys-Gly) (interchain with G-Cter in SUMO2)). The 136-residue stretch at 525–660 (GRSEAVVEYV…KQKKEKVWAH (136 aa)) folds into the TNase-like 4 domain. N6-acetyllysine is present on K641. Residue S645 is modified to Phosphoserine. Residues 729-787 (APRRGEFCIAKFVDGEWYRARVEKVESPAKIHVFYIDYGNREVLPSTRLGTLSPAFSTR) form the Tudor domain. At T779 the chain carries Phosphothreonine. S781, S785, and S909 each carry phosphoserine.

In terms of assembly, forms a ternary complex with STAT6 and POLR2A. Associates with the RNA-induced silencing complex (RISC). Interacts with the RISC components AGO2, FMR1 and TNRC6A. Interacts with GTF2E1 and GTF2E2. Interacts with PIM1. Interacts with STAT5. Interacts with SYT11 (via C2 2 domain); the interaction with SYT11 is direct. As to quaternary structure, (Microbial infection) Interacts with EAV NSP1. Binds to acidic transactivation domain of EBNA2. Interacts with SARS-CoV-2 NSP9. In terms of processing, phosphorylated by PIM1 in vitro. As to expression, ubiquitously expressed.

The protein localises to the cytoplasm. It is found in the nucleus. It localises to the melanosome. It catalyses the reaction Endonucleolytic cleavage to nucleoside 3'-phosphates and 3'-phosphooligonucleotide end-products.. Its function is as follows. Endonuclease that mediates miRNA decay of both protein-free and AGO2-loaded miRNAs. As part of its function in miRNA decay, regulates mRNAs involved in G1-to-S phase transition. Functions as a bridging factor between STAT6 and the basal transcription factor. Plays a role in PIM1 regulation of MYB activity. Functions as a transcriptional coactivator for STAT5. Functionally, (Microbial infection) Functions as a transcriptional coactivator for the Epstein-Barr virus nuclear antigen 2 (EBNA2). In terms of biological role, (Microbial infection) Promotes SARS-CoV-2 RNA synthesis by binding to negative-sense RNA and the viral protein nsp9. This chain is Staphylococcal nuclease domain-containing protein 1 (SND1), found in Homo sapiens (Human).